The chain runs to 181 residues: Crustacyanin-A1 subunit (181 aa).

Intrachain disulfides connect C12-C121, C51-C173, and C117-C150.

The protein belongs to the calycin superfamily. Lipocalin family. In terms of assembly, oligomer; Can form dimers (beta-crustacyanin); or complexes of 16 subunits (alpha-crustacyanin). There are five types of subunits: A1, A2, A3, C1 and C2. In terms of tissue distribution, found in the carapace.

It is found in the secreted. The protein localises to the extracellular space. Binds the carotenoid astaxanthin (AXT) which provides the blue coloration to the carapace of the lobster. This Homarus gammarus (European lobster) protein is Crustacyanin-A1 subunit.